The primary structure comprises 301 residues: Phosphoribosylaminoimidazole-succinocarboxamide synthase (301 aa).

The protein belongs to the SAICAR synthetase family.

It carries out the reaction 5-amino-1-(5-phospho-D-ribosyl)imidazole-4-carboxylate + L-aspartate + ATP = (2S)-2-[5-amino-1-(5-phospho-beta-D-ribosyl)imidazole-4-carboxamido]succinate + ADP + phosphate + 2 H(+). Its pathway is purine metabolism; IMP biosynthesis via de novo pathway; 5-amino-1-(5-phospho-D-ribosyl)imidazole-4-carboxamide from 5-amino-1-(5-phospho-D-ribosyl)imidazole-4-carboxylate: step 1/2. The sequence is that of Phosphoribosylaminoimidazole-succinocarboxamide synthase (ADE1) from Cyberlindnera jadinii (Torula yeast).